We begin with the raw amino-acid sequence, 264 residues long: MDEATQSAIQFDVVTLFPEMFRALTDWGITSRAVKQGRFGLRTWNPRDFTTDNYRTVDDRPYGGGPGMVMLAKPLEAAIGAAKAAQAAQGVATSRVVMMSPQGAPLTHERVARMAAEPGVVLLCGRYEAIDQRLIDRCVDEELSLGDFVLSGGELPAMALMDAVVRLLPGVLNDAQSAVQDSFADGLLDCPHYTRPEEYEGVRVPDVLLGGHHAEIERWRRQEALRNTIAKRPDLIARARREKLLSRADEAWLASLAKEAKQAS.

S-adenosyl-L-methionine is bound by residues Gly125 and 145–150; that span reads LGDFVL.

Belongs to the RNA methyltransferase TrmD family. Homodimer.

It is found in the cytoplasm. It carries out the reaction guanosine(37) in tRNA + S-adenosyl-L-methionine = N(1)-methylguanosine(37) in tRNA + S-adenosyl-L-homocysteine + H(+). Functionally, specifically methylates guanosine-37 in various tRNAs. The protein is tRNA (guanine-N(1)-)-methyltransferase of Burkholderia mallei (strain NCTC 10247).